The primary structure comprises 339 residues: Glycerol-3-phosphate dehydrogenase [NAD(P)+] (339 aa).

4 residues coordinate NADPH: serine 14, tyrosine 15, histidine 35, and lysine 109. Sn-glycerol 3-phosphate-binding residues include lysine 109, glycine 138, and threonine 140. NADPH is bound at residue alanine 142. Residues lysine 194, aspartate 247, serine 257, arginine 258, and asparagine 259 each contribute to the sn-glycerol 3-phosphate site. The Proton acceptor role is filled by lysine 194. Arginine 258 serves as a coordination point for NADPH. NADPH-binding residues include valine 282 and glutamate 284.

The protein belongs to the NAD-dependent glycerol-3-phosphate dehydrogenase family.

The protein resides in the cytoplasm. The catalysed reaction is sn-glycerol 3-phosphate + NAD(+) = dihydroxyacetone phosphate + NADH + H(+). The enzyme catalyses sn-glycerol 3-phosphate + NADP(+) = dihydroxyacetone phosphate + NADPH + H(+). Its pathway is membrane lipid metabolism; glycerophospholipid metabolism. In terms of biological role, catalyzes the reduction of the glycolytic intermediate dihydroxyacetone phosphate (DHAP) to sn-glycerol 3-phosphate (G3P), the key precursor for phospholipid synthesis. In Shewanella pealeana (strain ATCC 700345 / ANG-SQ1), this protein is Glycerol-3-phosphate dehydrogenase [NAD(P)+].